A 24-amino-acid polypeptide reads, in one-letter code: Neurotoxin-2 (24 aa).

The region spanning 1-24 (EDGYLLNRDTGCKVSCGTCRYCND) is the LCN-type CS-alpha/beta domain.

The protein belongs to the long (4 C-C) scorpion toxin superfamily. Sodium channel inhibitor family. Alpha subfamily. Expressed by the venom gland.

The protein resides in the secreted. Binds to sodium channels (Nav) and inhibits the inactivation of the activated channels, thereby blocking neuronal transmission. This toxin is active against mammals. This chain is Neurotoxin-2, found in Hottentotta tamulus (Eastern Indian scorpion).